The chain runs to 204 residues: Pectinesterase inhibitor 9 (204 aa).

The first 23 residues, 1–23 (MELKNTIFLVILLSITILQSSSA), serve as a signal peptide directing secretion. A glycan (N-linked (GlcNAc...) asparagine) is linked at N26. 2 disulfide bridges follow: C38-C47 and C106-C157.

Belongs to the PMEI family. Binds reversibly to PME3 to inhibit its activity; the stability of the PME3-PMEI9 complex and the inhibition of the pectin methylesterase (PME) activity is pH-dependent, based on protonation status of amino-acids at the complex interface. Highly expressed in roots and etiolated hypocotyls. Expressed in seedlings, leaves, stems, siliques, floral buds and mature seeds.

Its subcellular location is the secreted. It localises to the extracellular space. It is found in the apoplast. Functionally, pectin methylesterase (PME) inhibitor that probably targets root-expressed PME and PME3 in a moderate pH-dependent manner, mainly in slightly acidic conditions (pH 6.3 and 5.0) and to some extent at pH 7.5; this processus relies on changes in the protonation of amino acids involved in intermolecular and intramolecular interactions. Regulates de-methylesterification of pectins in roots and affects root growth. The chain is Pectinesterase inhibitor 9 from Arabidopsis thaliana (Mouse-ear cress).